The primary structure comprises 35 residues: Somatostatin (35 aa).

Cysteines 24 and 35 form a disulfide.

This sequence belongs to the somatostatin family.

The protein localises to the secreted. In terms of biological role, somatostatin inhibits the release of somatotropin. The protein is Somatostatin (sst) of Lampetra fluviatilis (European river lamprey).